The chain runs to 430 residues: Enolase (430 aa).

(2R)-2-phosphoglycerate is bound at residue Gln-167. The active-site Proton donor is Glu-209. Residues Asp-246, Glu-287, and Asp-314 each contribute to the Mg(2+) site. Positions 339, 368, 369, and 390 each coordinate (2R)-2-phosphoglycerate. Lys-339 (proton acceptor) is an active-site residue.

Belongs to the enolase family. Mg(2+) is required as a cofactor.

The protein localises to the cytoplasm. Its subcellular location is the secreted. It localises to the cell surface. The catalysed reaction is (2R)-2-phosphoglycerate = phosphoenolpyruvate + H2O. The protein operates within carbohydrate degradation; glycolysis; pyruvate from D-glyceraldehyde 3-phosphate: step 4/5. Catalyzes the reversible conversion of 2-phosphoglycerate (2-PG) into phosphoenolpyruvate (PEP). It is essential for the degradation of carbohydrates via glycolysis. The chain is Enolase from Prochlorococcus marinus (strain MIT 9515).